The primary structure comprises 838 residues: MPSHSRSRDRYRGRDESEPERDRRHYSRRRYRETDYEDDELDDDDYDRRRRYRRDDVYRRSRGQSRGYESHEYHEDDANEYDLAGEDPAVPLRRSRGDERERSAGAYDDYDSPRRRDRHRDGDRRRRHRAYEAEGSPPRGAPDHRRHRSRDDRRERAYESEREARRHRRRERGREAAAAKHQSSDSTNSGSHLLSADALAKLRSEYDKEDRSRAKADAKAEKKQRRKRPVVADQPRRLDPFPEETPRGQSKGRIVSGAYLEEGRSPEMKVRHRGGGGGGGAGSKWRDEGASDSDMDGAEGGTPFWKKKKTWIAVGVVVVLLAIIIPVAVVVSKKNNEKKSDSTTDDTTPRNSNLDGISRDSIPDYAKGTVLDPWTWYDTMGFNVTFTNETVGGLSIMGLNSTWDDSTRPNDNVPPLNEPFPYGSQPIRGVNLGGWLSIEPFIVPSLFESYSSVDGVVDEWTLCQKLGDSAASRIERHYATFITEQDFADIRDAGLDHVRIQFSYWAVTTYDGDQYVPKISWRYLLRAIEYCRKYGLRVKLDPHGIPGSQNGWNHSGRQGPIGWLNGTDGQLNRKRSLEMHDQLSQFFAQDRYKNIVTIYGLVNEPMMLSLPVEDVLDWSTEATKLIQKNGITAYVTVHDGFLNLSKWKQMLKTRPDRMFLDTHQYTIFNTAQIVMKHTEKIKLVCNDWHSMIQQINTTSAGWGPTICGEWSQADTDCTKYLNNVGRGTRWEGTFSLTDSTAYCPTAKSGPSCSCSSANADPSQYSDQYKKFLKTYAEAQMSAFETAQGWFYWTWHTESAPQWSYKTAWKNGFMPQKAYAPDFKCGDDVPDFGDLPENY.

Positions 1–23 are enriched in basic and acidic residues; that stretch reads MPSHSRSRDRYRGRDESEPERDR. Positions 1-298 are disordered; sequence MPSHSRSRDR…GASDSDMDGA (298 aa). The Cytoplasmic segment spans residues 1–310; the sequence is MPSHSRSRDR…GTPFWKKKKT (310 aa). Residues 35–45 are compositionally biased toward acidic residues; it reads DYEDDELDDDD. Composition is skewed to basic and acidic residues over residues 111–124, 149–164, 200–221, and 234–246; these read DSPR…DGDR, SRDD…EREA, AKLR…AKAE, and QPRR…EETP. Residues 311-331 traverse the membrane as a helical; Signal-anchor for type II membrane protein segment; the sequence is WIAVGVVVVLLAIIIPVAVVV. Topologically, residues 332-838 are extracellular; that stretch reads SKKNNEKKSD…PDFGDLPENY (507 aa). The tract at residues 335–359 is disordered; sequence NNEKKSDSTTDDTTPRNSNLDGISR. N-linked (GlcNAc...) asparagine glycans are attached at residues Asn-383, Asn-388, Asn-400, Asn-553, and Asn-565. Catalysis depends on Glu-604, which acts as the Proton donor. N-linked (GlcNAc...) asparagine glycans are attached at residues Asn-643 and Asn-696. The active-site Nucleophile is the Glu-709.

The protein belongs to the glycosyl hydrolase 5 (cellulase A) family.

The protein localises to the cell membrane. It catalyses the reaction Successive hydrolysis of beta-D-glucose units from the non-reducing ends of (1-&gt;3)-beta-D-glucans, releasing alpha-glucose.. Its function is as follows. Glucosidase involved in the degradation of cellulosic biomass. Active on lichenan. The sequence is that of Probable glucan 1,3-beta-glucosidase D (exgD) from Aspergillus terreus (strain NIH 2624 / FGSC A1156).